A 400-amino-acid polypeptide reads, in one-letter code: E3 ubiquitin-protein ligase RNF149 (400 aa).

An N-terminal signal peptide occupies residues 1–32 (MAWRRREASVGARGVLALALLALALCVPGARG). N-linked (GlcNAc...) asparagine glycosylation is found at N52 and N145. The PA domain occupies 67 to 175 (SSPKEGAHGL…PKGREILELV (109 aa)). A helical transmembrane segment spans residues 201 to 221 (VVFVAIAFITMMIISLAWLIF). An RING-type; atypical zinc finger spans residues 269–310 (CAVCIENFKVKDIIRILPCKHIFHRICIDPWLLDHRTCPMCK). A disordered region spans residues 325–400 (DVQEMPAPES…SDSRHGGPIS (76 aa)). Position 345 is a phosphoserine (S345). Residues 356–368 (DSSPPSASPAESE) show a composition bias toward low complexity. The segment covering 389–400 (GRSDSRHGGPIS) has biased composition (basic and acidic residues).

The protein localises to the membrane. It carries out the reaction S-ubiquitinyl-[E2 ubiquitin-conjugating enzyme]-L-cysteine + [acceptor protein]-L-lysine = [E2 ubiquitin-conjugating enzyme]-L-cysteine + N(6)-ubiquitinyl-[acceptor protein]-L-lysine.. The protein operates within protein modification; protein ubiquitination. Functionally, E3 ubiquitin-protein ligase. Ubiquitinates BRAF, inducing its proteasomal degradation. The protein is E3 ubiquitin-protein ligase RNF149 (RNF149) of Homo sapiens (Human).